The following is a 434-amino-acid chain: MAARRRHVAAGAGAPAPAAGEWPAVTAGGGAAWALSPVEEVGTKQELMRRTGLPPRDLRALDPALSSAASASSCRPSAITGRDRAVVVNLDRARAVITASEVLVPSPRDPAVAPLVRELRARLALAASPTPAPSPSPPQHGMAVGMDGSISPSQASRGGEEAAGNGKDGEALGGGDKALPFEFRALEVCLEFACKSLEHETCTLEKEAYPALDELTSKVSTLNLERVRQIKSRLVAISGKVQKVRDELEHLLDDDMDMAALHLTEKLAYQSSRFDIDKEASELEDHSSRDEEGVEGGGGGDGDDETIAGGGSFSPNTDELEILLESYFVQIDGTLNSLSTLREYVEDTEDYINMMLDEKQNQLLQMGILLSTGTLVSSCAIAVTGVFGINVHISLYDSPASSAAFPCAAAGIVAGSLALYLAALLCYKRAGILQ.

Disordered regions lie at residues 1–21, 126–171, and 279–311; these read MAARRRHVAAGAGAPAPAAGE, AASP…DGEA, and EASELEDHSSRDEEGVEGGGGGDGDDETIAGGG. Low complexity predominate over residues 9–21; the sequence is AAGAGAPAPAAGE. The segment covering 279–291 has biased composition (basic and acidic residues); that stretch reads EASELEDHSSRDE. Transmembrane regions (helical) follow at residues 367–387 and 405–425; these read GILLSTGTLVSSCAIAVTGVF and FPCAAAGIVAGSLALYLAALL.

This sequence belongs to the CorA metal ion transporter (MIT) (TC 1.A.35.5) family.

The protein resides in the membrane. In terms of biological role, putative magnesium transporter. The sequence is that of Putative magnesium transporter MRS2-D (MRS2-D) from Oryza sativa subsp. indica (Rice).